Here is a 158-residue protein sequence, read N- to C-terminus: Small ribosomal subunit protein uS7 (158 aa).

This sequence belongs to the universal ribosomal protein uS7 family. Part of the 30S ribosomal subunit. Contacts proteins S9 and S11.

Its function is as follows. One of the primary rRNA binding proteins, it binds directly to 16S rRNA where it nucleates assembly of the head domain of the 30S subunit. Is located at the subunit interface close to the decoding center, probably blocks exit of the E-site tRNA. This is Small ribosomal subunit protein uS7 from Azobacteroides pseudotrichonymphae genomovar. CFP2.